The sequence spans 130 residues: Large ribosomal subunit protein bL20c (130 aa).

This sequence belongs to the bacterial ribosomal protein bL20 family.

The protein localises to the plastid. It is found in the chloroplast. In terms of biological role, binds directly to 23S ribosomal RNA and is necessary for the in vitro assembly process of the 50S ribosomal subunit. It is not involved in the protein synthesizing functions of that subunit. This Glycine max (Soybean) protein is Large ribosomal subunit protein bL20c (rpl20).